Reading from the N-terminus, the 333-residue chain is DNA-directed RNA polymerase subunit alpha (333 aa).

Residues 1–234 form an alpha N-terminal domain (alpha-NTD) region; the sequence is MQISVNEFLT…QQLAAFVDLK (234 aa). The interval 248-333 is alpha C-terminal domain (alpha-CTD); that stretch reads IDPILLRPVD…SLKKDDKATA (86 aa).

The protein belongs to the RNA polymerase alpha chain family. As to quaternary structure, homodimer. The RNAP catalytic core consists of 2 alpha, 1 beta, 1 beta' and 1 omega subunit. When a sigma factor is associated with the core the holoenzyme is formed, which can initiate transcription.

The enzyme catalyses RNA(n) + a ribonucleoside 5'-triphosphate = RNA(n+1) + diphosphate. Functionally, DNA-dependent RNA polymerase catalyzes the transcription of DNA into RNA using the four ribonucleoside triphosphates as substrates. The protein is DNA-directed RNA polymerase subunit alpha of Pseudomonas fluorescens (strain ATCC BAA-477 / NRRL B-23932 / Pf-5).